A 577-amino-acid polypeptide reads, in one-letter code: Anthranilate synthase alpha subunit 1, chloroplastic (577 aa).

A chloroplast-targeting transit peptide spans 1 to 34; that stretch reads MASLVLSLRIAPSTPPLGLGGGRFRGRRGAVACR.

The protein belongs to the anthranilate synthase component I family. As to quaternary structure, heterotetramer consisting of two non-identical subunits: a beta subunit and a large alpha subunit.

The protein localises to the plastid. The protein resides in the chloroplast. It catalyses the reaction chorismate + L-glutamine = anthranilate + pyruvate + L-glutamate + H(+). Its pathway is amino-acid biosynthesis; L-tryptophan biosynthesis; L-tryptophan from chorismate: step 1/5. With respect to regulation, feedback inhibition by tryptophan. Functionally, part of a heterotetrameric complex that catalyzes the two-step biosynthesis of anthranilate, an intermediate in the biosynthesis of L-tryptophan. In the first step, the glutamine-binding beta subunit of anthranilate synthase (AS) provides the glutamine amidotransferase activity which generates ammonia as a substrate that, along with chorismate, is used in the second step, catalyzed by the large alpha subunit of AS to produce anthranilate. The protein is Anthranilate synthase alpha subunit 1, chloroplastic (ASA1) of Oryza sativa subsp. indica (Rice).